The following is an 80-amino-acid chain: Conotoxin SmIVB (80 aa).

The N-terminal stretch at M1–S21 is a signal peptide. Residues I22–R38 constitute a propeptide that is removed on maturation. P40 carries the 4-hydroxyproline modification. S45 carries an O-linked (HexNAc...) serine glycan. 4-hydroxyproline is present on residues P55, P60, P61, P70, and P72. Position 75 is a serine amide (S75). The propeptide occupies G76–H80.

This sequence belongs to the conotoxin A superfamily. In terms of processing, contains 3 disulfide bonds. Expressed by the venom duct.

Its subcellular location is the secreted. Functionally, neurotoxin with probable activity on sodium channel. Induces intense repetitive firing of the frog neuromuscular junction, leading to a tetanic contracture in muscle fiber (spastic paralysis). In vivo, shows the same effect as the whole venom when injected on fish prey. This chain is Conotoxin SmIVB, found in Conus stercusmuscarum (Fly-specked cone).